The sequence spans 1271 residues: SR-related and CTD-associated factor 8 (1271 aa).

Positions 1–139 constitute a CID domain; it reads MEAVKTFNSE…PLLDMAAGIP (139 aa). T6 carries the post-translational modification Phosphothreonine. A Glycyl lysine isopeptide (Lys-Gly) (interchain with G-Cter in SUMO1) cross-link involves residue K18. Over residues 270–283 the composition is skewed to basic and acidic residues; sequence GEDSEHSEEPKKEI. 3 disordered regions span residues 270–289, 322–354, and 384–468; these read GEDS…SQLS, QQQP…SQQH, and EEVF…PPIR. S273 carries the phosphoserine modification. The segment covering 327–354 has biased composition (polar residues); that stretch reads KATPQDSQEGTFGSEHSASPSQGSSQQH. Residues 394–443 show a composition bias toward basic residues; the sequence is VAVRSRSRTHSRSRSRSPRKRRSRSRSGSRKRKHRKRSRSRSRERKRKSS. Over residues 447–461 the composition is skewed to basic and acidic residues; sequence SSERRAREREKERQK. The region spanning 477-551 is the RRM domain; sequence TTLWVGQVDK…KVIKIAWALN (75 aa). Position 615 is a phosphothreonine (T615). A phosphoserine mark is found at S617 and S779. The disordered stretch occupies residues 899-918; it reads TQPPAGPQNLPPLSIPNQRM. Over residues 902–912 the composition is skewed to pro residues; sequence PAGPQNLPPLS. R917, R927, and R938 each carry asymmetric dimethylarginine. Pro residues-rich tracts occupy residues 945–956 and 963–972; these read GIPPQRGIPPPS and HPPPRGPFPP. The tract at residues 945 to 1064 is disordered; the sequence is GIPPQRGIPP…DGRDHFGRPP (120 aa). Composition is skewed to basic and acidic residues over residues 1011–1027 and 1034–1064; these read EGDR…RESI and DVRD…GRPP. R1073 carries the post-translational modification Asymmetric dimethylarginine. A disordered region spans residues 1198 to 1271; the sequence is YFEGATSQRK…VVESTETEGT (74 aa). Positions 1255–1271 are enriched in acidic residues; the sequence is ADIESEPVVESTETEGT.

In terms of assembly, interacts with POLR2A; via C-terminal heptapeptide repeat domain (CTD) phosphorylated at 'Ser-2' and 'Ser-5'. Identified in a complex with CDC5L and other spliceosomal proteins.

The protein resides in the nucleus. The protein localises to the nucleus matrix. Its function is as follows. Anti-terminator protein required to prevent early mRNA termination during transcription. Together with SCAF4, acts by suppressing the use of early, alternative poly(A) sites, thereby preventing the accumulation of non-functional truncated proteins. Mechanistically, associates with the phosphorylated C-terminal heptapeptide repeat domain (CTD) of the largest RNA polymerase II subunit (POLR2A), and subsequently binds nascent RNA upstream of early polyadenylation sites to prevent premature mRNA transcript cleavage and polyadenylation. Independently of SCAF4, also acts as a positive regulator of transcript elongation. This is SR-related and CTD-associated factor 8 from Homo sapiens (Human).